The chain runs to 396 residues: Phosphoglycerate kinase (396 aa).

Substrate-binding positions include 19–21, R35, 58–61, R117, and R150; these read DFN and HLGR. Residues K201, E323, and 349 to 352 each bind ATP; that span reads GGDT.

This sequence belongs to the phosphoglycerate kinase family. In terms of assembly, monomer.

Its subcellular location is the cytoplasm. It carries out the reaction (2R)-3-phosphoglycerate + ATP = (2R)-3-phospho-glyceroyl phosphate + ADP. It functions in the pathway carbohydrate degradation; glycolysis; pyruvate from D-glyceraldehyde 3-phosphate: step 2/5. The protein is Phosphoglycerate kinase of Desulfosudis oleivorans (strain DSM 6200 / JCM 39069 / Hxd3) (Desulfococcus oleovorans).